The chain runs to 372 residues: Glutamate 5-kinase (372 aa).

Position 14 (Lys14) interacts with ATP. Substrate-binding residues include Ser54, Asp141, and Asn153. Thr173 to Asp174 is an ATP binding site. The PUA domain maps to Arg280–Met358.

Belongs to the glutamate 5-kinase family.

The protein resides in the cytoplasm. It catalyses the reaction L-glutamate + ATP = L-glutamyl 5-phosphate + ADP. It participates in amino-acid biosynthesis; L-proline biosynthesis; L-glutamate 5-semialdehyde from L-glutamate: step 1/2. Its function is as follows. Catalyzes the transfer of a phosphate group to glutamate to form L-glutamate 5-phosphate. In Burkholderia orbicola (strain MC0-3), this protein is Glutamate 5-kinase.